Reading from the N-terminus, the 246-residue chain is 1-(5-phosphoribosyl)-5-[(5-phosphoribosylamino)methylideneamino] imidazole-4-carboxamide isomerase (246 aa).

Asp7 serves as the catalytic Proton acceptor. Asp130 functions as the Proton donor in the catalytic mechanism.

This sequence belongs to the HisA/HisF family.

The protein localises to the cytoplasm. The catalysed reaction is 1-(5-phospho-beta-D-ribosyl)-5-[(5-phospho-beta-D-ribosylamino)methylideneamino]imidazole-4-carboxamide = 5-[(5-phospho-1-deoxy-D-ribulos-1-ylimino)methylamino]-1-(5-phospho-beta-D-ribosyl)imidazole-4-carboxamide. Its pathway is amino-acid biosynthesis; L-histidine biosynthesis; L-histidine from 5-phospho-alpha-D-ribose 1-diphosphate: step 4/9. In Blochmanniella pennsylvanica (strain BPEN), this protein is 1-(5-phosphoribosyl)-5-[(5-phosphoribosylamino)methylideneamino] imidazole-4-carboxamide isomerase.